Consider the following 185-residue polypeptide: Elongation factor P (185 aa).

This sequence belongs to the elongation factor P family.

Its subcellular location is the cytoplasm. The protein operates within protein biosynthesis; polypeptide chain elongation. Involved in peptide bond synthesis. Stimulates efficient translation and peptide-bond synthesis on native or reconstituted 70S ribosomes in vitro. Probably functions indirectly by altering the affinity of the ribosome for aminoacyl-tRNA, thus increasing their reactivity as acceptors for peptidyl transferase. The protein is Elongation factor P of Salinispora tropica (strain ATCC BAA-916 / DSM 44818 / JCM 13857 / NBRC 105044 / CNB-440).